Reading from the N-terminus, the 274-residue chain is tRNA-cytidine(32) 2-sulfurtransferase (274 aa).

Positions 40–45 (SGGKDS) match the PP-loop motif motif. [4Fe-4S] cluster is bound by residues C115, C118, and C206.

This sequence belongs to the TtcA family. Homodimer. It depends on Mg(2+) as a cofactor. [4Fe-4S] cluster serves as cofactor.

The protein resides in the cytoplasm. It carries out the reaction cytidine(32) in tRNA + S-sulfanyl-L-cysteinyl-[cysteine desulfurase] + AH2 + ATP = 2-thiocytidine(32) in tRNA + L-cysteinyl-[cysteine desulfurase] + A + AMP + diphosphate + H(+). Its pathway is tRNA modification. In terms of biological role, catalyzes the ATP-dependent 2-thiolation of cytidine in position 32 of tRNA, to form 2-thiocytidine (s(2)C32). The sulfur atoms are provided by the cysteine/cysteine desulfurase (IscS) system. This chain is tRNA-cytidine(32) 2-sulfurtransferase, found in Pseudomonas putida (strain ATCC 47054 / DSM 6125 / CFBP 8728 / NCIMB 11950 / KT2440).